Reading from the N-terminus, the 245-residue chain is MFKWLMSSLCGIRNSTSPEVYEPIIGGQNPATMLRLQSALAAVNALLPATLTIEDVISSADNTRRLVKAQTLARTYQACQHNIECLSRHRASSDNPNLNAVVTTHMINAKRLSDTCLAALMHLYLSVGAVDATTDTMVDHAIRMTAENSVVMADVAVLEKTLGLDPQATVRAQDLLALNSGVLNSVNAVAEMTDPTDDVEFTQSVHSPLLPRQLSTTEVVGVPSPVKSNLKSKHKPKRKASLVAV.

A lipid anchor (S-palmitoyl cysteine; by host) is attached at C10. The interval 225 to 245 (PVKSNLKSKHKPKRKASLVAV) is disordered. Residues 230-245 (LKSKHKPKRKASLVAV) show a composition bias toward basic residues.

Belongs to the herpesviridae UL51 family. Oligomerizes. Interacts with ORF55; this interaction mediates ORF55 incorporation to virions. Post-translationally, phosphorylated. Palmitoylation is necessary for Golgi localization.

Its subcellular location is the virion tegument. It is found in the host cytoplasm. It localises to the host Golgi apparatus. In terms of biological role, plays several roles during the time course of infection, including egress of virus particles from the perinuclear space and secondary envelopment of cytoplasmic capsids that bud into specific trans-Golgi network (TGN)-derived membranes. This Equine herpesvirus 1 (strain Ab4p) (EHV-1) protein is Tegument protein UL51 homolog.